Consider the following 266-residue polypeptide: Hemin import ATP-binding protein HmuV (266 aa).

An ABC transporter domain is found at 12–248 (LEANQLSYHV…ETLTRWYQAD (237 aa)). Residue 44–51 (GPNGAGKS) participates in ATP binding.

It belongs to the ABC transporter superfamily. Heme (hemin) importer (TC 3.A.1.14.5) family. The complex is composed of two ATP-binding proteins (HmuV), two transmembrane proteins (HmuU) and a solute-binding protein (HmuT).

It is found in the cell inner membrane. In terms of biological role, part of the ABC transporter complex HmuTUV involved in hemin import. Responsible for energy coupling to the transport system. The chain is Hemin import ATP-binding protein HmuV from Yersinia enterocolitica.